The primary structure comprises 252 residues: Chaplin-A (252 aa).

The first 20 residues, 1–20 (MVAAAAATGILSLCGSPALA), serve as a signal peptide directing secretion. The Chaplin 1 domain maps to 31–71 (SPGAVSGNALQVPVDVPVNACGNTVDVIAALNPAFGNECEN). 2 disordered regions span residues 71-121 (NASD…GNNA) and 150-224 (CEND…GSEG). A compositionally biased stretch (low complexity) spans 86 to 108 (EDASSSSSSSTSASSSGSHADGA). In terms of domain architecture, Chaplin 2 spans 112–152 (SPGVGSGNNAQVPVDVPVNLCGNTVDVIAALNPVFGNKCEN). The segment covering 153 to 165 (DAEEPPGYGEEEP) has biased composition (acidic residues). Over residues 210–224 (QTEQPPALAETGSEG) the composition is skewed to low complexity. Positions 217–221 (LAETG) match the LPXTG sorting signal motif. 2 propeptides (removed by sortase) span residues 219 to 252 (ETGS…LSGR) and 221 to 252 (GSEG…LSGR). At T220 the chain carries Pentaglycyl murein peptidoglycan amidated threonine.

The protein belongs to the chaplin family. Long chaplin subfamily.

Its subcellular location is the secreted. The protein localises to the cell wall. Functionally, one of 8 partially redundant surface-active proteins required for efficient formation of aerial mycelium; the short chaplins assemble into a hydrophobic, amyloidal fibrillar surface layer that envelopes and protects aerial hyphae and spores, presumably anchored to the long chaplins. Chaplins have an overlapping function with the surface-active SapB peptide; chaplins are essential on minimal medium while on rich medium both chaplins and SapB are required for efficient aerial hyphae formation. A minimal chaplin strain capable of forming aerial mycelium/hyphae on minimal medium contains ChpC, ChpE and ChpH. The strain also has restored rodlet formation on the hyphae surface. A second minimal chaplin strain with ChpA, ChpD and ChpE makes slightly less robust hyphae. The long chaplins (ChpA, ChpB, ChpC) are not absolutely necessary for short chaplin localization or rodlet formation, but probably play a role in initiating aerial hyphae development. Chaplins are also involved in cell attachment to a hydrophobic surface. The chain is Chaplin-A from Streptomyces coelicolor (strain ATCC BAA-471 / A3(2) / M145).